Here is a 124-residue protein sequence, read N- to C-terminus: Small ribosomal subunit protein uS12 (124 aa).

Positions 105 to 124 (SGVNDRRQGRSKYGAKRPKS) are disordered. Over residues 113-124 (GRSKYGAKRPKS) the composition is skewed to basic residues.

The protein belongs to the universal ribosomal protein uS12 family. In terms of assembly, part of the 30S ribosomal subunit. Contacts proteins S8 and S17. May interact with IF1 in the 30S initiation complex.

In terms of biological role, with S4 and S5 plays an important role in translational accuracy. Functionally, interacts with and stabilizes bases of the 16S rRNA that are involved in tRNA selection in the A site and with the mRNA backbone. Located at the interface of the 30S and 50S subunits, it traverses the body of the 30S subunit contacting proteins on the other side and probably holding the rRNA structure together. The combined cluster of proteins S8, S12 and S17 appears to hold together the shoulder and platform of the 30S subunit. In Idiomarina loihiensis (strain ATCC BAA-735 / DSM 15497 / L2-TR), this protein is Small ribosomal subunit protein uS12.